The following is a 445-amino-acid chain: GTPase Der (445 aa).

2 consecutive EngA-type G domains span residues Pro-3–Gln-167 and Ile-180–Met-353. GTP is bound by residues Gly-9–Ser-16, Asp-56–Phe-60, Asn-119–Glu-122, Gly-186–Ser-193, Asp-233–Leu-237, and Asn-298–Asp-301. Positions Ala-354–Asn-438 constitute a KH-like domain.

This sequence belongs to the TRAFAC class TrmE-Era-EngA-EngB-Septin-like GTPase superfamily. EngA (Der) GTPase family. As to quaternary structure, associates with the 50S ribosomal subunit.

Functionally, GTPase that plays an essential role in the late steps of ribosome biogenesis. The chain is GTPase Der from Burkholderia ambifaria (strain ATCC BAA-244 / DSM 16087 / CCUG 44356 / LMG 19182 / AMMD) (Burkholderia cepacia (strain AMMD)).